The sequence spans 598 residues: Beta-fructofuranosidase, insoluble isoenzyme 2 (598 aa).

The signal sequence occupies residues 1 to 25 (MGVLGSRVAWAWLVQLLLLQQLAGA). Residue aspartate 69 is part of the active site. Asparagine 164, asparagine 189, and asparagine 348 each carry an N-linked (GlcNAc...) asparagine glycan.

This sequence belongs to the glycosyl hydrolase 32 family. Expressed in leaves and flowers. Weakly expressed in seeds. Expressed in growing roots, node and the rapidly elongating zone of the internode.

It localises to the secreted. The protein localises to the cell wall. It carries out the reaction Hydrolysis of terminal non-reducing beta-D-fructofuranoside residues in beta-D-fructofuranosides.. Its function is as follows. Cell wall-associated invertase that cleaves sucrose into glucose and fructose and is required for assimilated carbon partitioning during early grain-filling. May be involved in sucrose unloaded in the ovular and stylar vascular tissues for the stimulation of starch synthesis in the developing endosperm during grain-filling. Sugar homeostasis mediated by CIN2/GIF1 plays an important role in constitutive and induced physical and chemical defense against pathogens. This Oryza sativa subsp. japonica (Rice) protein is Beta-fructofuranosidase, insoluble isoenzyme 2 (CIN2).